Reading from the N-terminus, the 244-residue chain is Pyridoxal phosphate homeostasis protein (244 aa).

N6-(pyridoxal phosphate)lysine is present on K37.

It belongs to the pyridoxal phosphate-binding protein YggS/PROSC family.

Its function is as follows. Pyridoxal 5'-phosphate (PLP)-binding protein, which may be involved in intracellular homeostatic regulation of pyridoxal 5'-phosphate (PLP), the active form of vitamin B6. This Caenorhabditis elegans protein is Pyridoxal phosphate homeostasis protein.